A 339-amino-acid chain; its full sequence is tRNA dimethylallyltransferase (339 aa).

36-43 lines the ATP pocket; the sequence is GPTGSGKT. Substrate is bound at residue 38–43; it reads TGSGKT. Residues 61-64 are interaction with substrate tRNA; the sequence is DSMQ.

It belongs to the IPP transferase family. As to quaternary structure, monomer. Mg(2+) serves as cofactor.

The enzyme catalyses adenosine(37) in tRNA + dimethylallyl diphosphate = N(6)-dimethylallyladenosine(37) in tRNA + diphosphate. Functionally, catalyzes the transfer of a dimethylallyl group onto the adenine at position 37 in tRNAs that read codons beginning with uridine, leading to the formation of N6-(dimethylallyl)adenosine (i(6)A). The sequence is that of tRNA dimethylallyltransferase from Chlamydia trachomatis serovar A (strain ATCC VR-571B / DSM 19440 / HAR-13).